A 161-amino-acid polypeptide reads, in one-letter code: Peptidyl-prolyl cis-trans isomerase (161 aa).

One can recognise a PPIase cyclophilin-type domain in the interval phenylalanine 6–glutamate 160.

The protein belongs to the cyclophilin-type PPIase family. PPIase A subfamily. In terms of tissue distribution, found mainly in the tegument, gut epithelium, and muscle layers. Also found in the interior of the parasite.

The catalysed reaction is [protein]-peptidylproline (omega=180) = [protein]-peptidylproline (omega=0). With respect to regulation, binds cyclosporin A (CsA). CsA mediates some of its effects via an inhibitory action on PPIase. In terms of biological role, PPIases accelerate the folding of proteins. It catalyzes the cis-trans isomerization of proline imidic peptide bonds in oligopeptides. In Schistosoma mansoni (Blood fluke), this protein is Peptidyl-prolyl cis-trans isomerase.